A 434-amino-acid chain; its full sequence is ATP-dependent RNA helicase SUB2 (434 aa).

Positions 1–16 are enriched in acidic residues; sequence MSGEEDLIDYSDDELN. The interval 1-32 is disordered; sequence MSGEEDLIDYSDDELNNETTAPASNGKKGDAA. Residues 50–78 carry the Q motif motif; that stretch reads TGFRDFLLKPELLRAIADCGFEHPSEVQQ. Positions 81–256 constitute a Helicase ATP-binding domain; the sequence is IPQAMLGGDI…RKFMQNPTEH (176 aa). Residue 94–101 coordinates ATP; that stretch reads AKSGLGKT. Residues 203-206 carry the DEAD box motif; that stretch reads DECD. The region spanning 268 to 429 is the Helicase C-terminal domain; the sequence is GLQQYYIPLE…EFPKEGIDAS (162 aa).

The protein belongs to the DEAD box helicase family. DECD subfamily.

It localises to the nucleus. The enzyme catalyses ATP + H2O = ADP + phosphate + H(+). In terms of biological role, ATP-binding RNA helicase involved in transcription elongation and required for the export of mRNA out of the nucleus. SUB2 also plays a role in pre-mRNA splicing and spliceosome assembly. May be involved in rDNA and telomeric silencing, and maintenance of genome integrity. The polypeptide is ATP-dependent RNA helicase SUB2 (SUB2) (Chaetomium globosum (strain ATCC 6205 / CBS 148.51 / DSM 1962 / NBRC 6347 / NRRL 1970) (Soil fungus)).